Consider the following 412-residue polypeptide: Adenosine receptor A2a (412 aa).

Residues 1–7 (MPTVGSL) are Extracellular-facing. A helical membrane pass occupies residues 8–32 (VYIMVELAIALLAILGNMLVCWAVW). Over 33-42 (LNSNLQNVTN) the chain is Cytoplasmic. Residues 43 to 66 (YFVVSLAAADIAVGVLAIPFAITI) traverse the membrane as a helical segment. Topologically, residues 67–77 (STGFCAACHGC) are extracellular. Intrachain disulfides connect cysteine 71–cysteine 159, cysteine 74–cysteine 146, and cysteine 77–cysteine 166. The helical transmembrane segment at 78–100 (LFIACFVLVLTQSSIFSLLAIAI) threads the bilayer. The Cytoplasmic segment spans residues 101–120 (DRYIAIRIPLRYNGLVTGTR). A helical membrane pass occupies residues 121 to 143 (AKGVIAVCWVLSFAIGLTPMLGW). Topologically, residues 144-173 (NNCHHWGEGENQSQGCGEGQVACLFEDVVP) are extracellular. Asparagine 154 carries an N-linked (GlcNAc...) asparagine glycan. Glutamate 169 provides a ligand contact to adenosine. The chain crosses the membrane as a helical span at residues 174-198 (MNYMVYYNFFACVLVPLLLMLGVYL). The Cytoplasmic segment spans residues 199–234 (RIFLAARRQLKQMETQPLPGERARSTLQKEVHAAKS). Residues 235-258 (LAIIVGLFALCWLPLHIINCFTFF) traverse the membrane as a helical segment. Asparagine 253 is an adenosine binding site. A disulfide bridge links cysteine 259 with cysteine 262. Over 259 to 266 (CPECPHAP) the chain is Extracellular. The chain crosses the membrane as a helical span at residues 267-290 (LWLMYPAIILSHFNSVVNPFIYAY). Adenosine-binding residues include serine 277 and histidine 278. Residues 291-412 (RIREFRHTFH…PLAQDGAGVS (122 aa)) are Cytoplasmic-facing. Residues 368 to 412 (RASARESPGDTGLPDVELLSHELHGASPESPGLEGPLAQDGAGVS) are disordered.

Belongs to the G-protein coupled receptor 1 family. Interacts (via cytoplasmic C-terminal domain) with USP4; the interaction is direct. May interact with DRD4. Interacts with NECAB2. Interacts (via cytoplasmic C-terminal domain) with GAS2L2; interaction enhances receptor-mediated adenylyl cyclase activity. Ubiquitinated. Deubiquitinated by USP4; leading to stabilization and expression at the cell surface.

Its subcellular location is the cell membrane. Functionally, receptor for adenosine. The activity of this receptor is mediated by G proteins which activate adenylyl cyclase. In Equus caballus (Horse), this protein is Adenosine receptor A2a (ADORA2A).